The sequence spans 229 residues: Cytidylate kinase (229 aa).

15-23 (GPAASGKST) provides a ligand contact to ATP.

It belongs to the cytidylate kinase family. Type 1 subfamily.

The protein resides in the cytoplasm. The enzyme catalyses CMP + ATP = CDP + ADP. It carries out the reaction dCMP + ATP = dCDP + ADP. The chain is Cytidylate kinase from Herpetosiphon aurantiacus (strain ATCC 23779 / DSM 785 / 114-95).